We begin with the raw amino-acid sequence, 318 residues long: Ribosomal RNA small subunit methyltransferase H (318 aa).

S-adenosyl-L-methionine contacts are provided by residues 35–37 (GGH), Asp54, Phe83, Asp104, and Gln111.

Belongs to the methyltransferase superfamily. RsmH family.

Its subcellular location is the cytoplasm. It carries out the reaction cytidine(1402) in 16S rRNA + S-adenosyl-L-methionine = N(4)-methylcytidine(1402) in 16S rRNA + S-adenosyl-L-homocysteine + H(+). Its function is as follows. Specifically methylates the N4 position of cytidine in position 1402 (C1402) of 16S rRNA. This is Ribosomal RNA small subunit methyltransferase H from Latilactobacillus sakei subsp. sakei (strain 23K) (Lactobacillus sakei subsp. sakei).